The sequence spans 185 residues: Ribosome-recycling factor (185 aa).

The disordered stretch occupies residues 142 to 165 (IVKDGDAGEDEGSRAEKELDGLTK).

Belongs to the RRF family.

The protein localises to the cytoplasm. Responsible for the release of ribosomes from messenger RNA at the termination of protein biosynthesis. May increase the efficiency of translation by recycling ribosomes from one round of translation to another. In Renibacterium salmoninarum (strain ATCC 33209 / DSM 20767 / JCM 11484 / NBRC 15589 / NCIMB 2235), this protein is Ribosome-recycling factor.